Reading from the N-terminus, the 133-residue chain is Large-conductance mechanosensitive channel (133 aa).

A run of 2 helical transmembrane segments spans residues 14–34 and 67–87; these read VVDL…VSSL and GNFI…FMFV.

It belongs to the MscL family. Homopentamer.

The protein resides in the cell membrane. Its function is as follows. Channel that opens in response to stretch forces in the membrane lipid bilayer. May participate in the regulation of osmotic pressure changes within the cell. The sequence is that of Large-conductance mechanosensitive channel from Bacillus cereus (strain AH187).